The chain runs to 89 residues: Small ribosomal subunit protein uS15 (89 aa).

This sequence belongs to the universal ribosomal protein uS15 family. As to quaternary structure, part of the 30S ribosomal subunit. Forms a bridge to the 50S subunit in the 70S ribosome, contacting the 23S rRNA.

Functionally, one of the primary rRNA binding proteins, it binds directly to 16S rRNA where it helps nucleate assembly of the platform of the 30S subunit by binding and bridging several RNA helices of the 16S rRNA. In terms of biological role, forms an intersubunit bridge (bridge B4) with the 23S rRNA of the 50S subunit in the ribosome. In Actinobacillus pleuropneumoniae serotype 5b (strain L20), this protein is Small ribosomal subunit protein uS15.